We begin with the raw amino-acid sequence, 469 residues long: MAAMDTESAPLTLESLPTDPLLLILSFLDYRDLINCCYVSRRLSQLSSHDPLWRRHCKKYWLISEEEKTQKNQCWKSLFIDTYSDVGRYIDHYAAIKKAWDDLKKYLEPRCPRMVLSLKEGAREEDLDAVEAQIGCKLPDDYRCSYRIHNGQKLVVPGLLGSMALSNHYRSEDLLDVDTAAGGFQQRQGLKSCLPLTFCIHTGLSQYIAVEAAEGRNKNEVFYQCPDQMARNPAAIDMFIIGATFTDWFTSYVNSVVSGGFPIIRDQIFRYVHDPECVATTGDITVSVSTSFLPELSSVHPPHYFFTYRIRIEMSKDALPEKACQLDSRYWRITNAKGDVEEVQGPGVVGEFPIISPGRVYEYTSCTTFSTTSGYMEGYYTFHFLYFKDKIFNVAIPRFHMACPTFRVSIARLEMGPDEYEEMEEEEEEEEEEDDDDSADMDESDDDEEERQRRVFDVPIRRRRCSRLF.

In terms of domain architecture, F-box spans 10–56 (PLTLESLPTDPLLLILSFLDYRDLINCCYVSRRLSQLSSHDPLWRRH). The region spanning 278–408 (VATTGDITVS…FHMACPTFRV (131 aa)) is the ApaG domain. Residues 419–449 (EYEEMEEEEEEEEEEDDDDSADMDESDDDEE) show a composition bias toward acidic residues. Positions 419-454 (EYEEMEEEEEEEEEEDDDDSADMDESDDDEEERQRR) are disordered.

In terms of assembly, part of a SCF (SKP1-cullin-F-box) protein ligase complex SCF(FBXO3) consisting of FBXO3, SKP1, CUL1 and RBX1. Interacts with PML, interaction is direct and takes place either alone or within the SCF complex.

It is found in the nucleus. The protein operates within protein modification; protein ubiquitination. In terms of biological role, substrate recognition component of the SCF (SKP1-CUL1-F-box protein)-type E3 ubiquitin ligase complex, SCF(FBXO3), which mediates the ubiquitination and subsequent proteasomal degradation of target proteins. Mediates the ubiquitination of HIPK2 and probably that of EP300, leading to rapid degradation by the proteasome. In the presence of PML, HIPK2 ubiquitination still occurs, but degradation is prevented. PML, HIPK2 and FBXO3 may act synergically to activate p53/TP53-dependent transactivation. The SCF(FBXO3) also acts as a regulator of inflammation by mediating ubiquitination and degradation of FBXL2 in response to lipopolysaccharide (LPS). The SCF(FBXO3) complex specifically recognizes FBXL2 phosphorylated at 'Thr-404' and promotes its ubiquitination. The chain is F-box only protein 3 (FBXO3) from Bos taurus (Bovine).